Consider the following 404-residue polypeptide: Argininosuccinate synthase (404 aa).

ATP contacts are provided by residues 12-20 and Ala39; that span reads AYSGGLDTS. L-citrulline is bound by residues Tyr91 and Ser96. Gly121 is a binding site for ATP. Positions 123, 127, and 128 each coordinate L-aspartate. Asn127 is a binding site for L-citrulline. L-citrulline-binding residues include Arg131, Ser180, Ser189, Glu265, and Tyr277.

The protein belongs to the argininosuccinate synthase family. Type 1 subfamily. As to quaternary structure, homotetramer.

Its subcellular location is the cytoplasm. The catalysed reaction is L-citrulline + L-aspartate + ATP = 2-(N(omega)-L-arginino)succinate + AMP + diphosphate + H(+). It participates in amino-acid biosynthesis; L-arginine biosynthesis; L-arginine from L-ornithine and carbamoyl phosphate: step 2/3. This is Argininosuccinate synthase from Vibrio parahaemolyticus serotype O3:K6 (strain RIMD 2210633).